The following is a 535-amino-acid chain: Palmdelphin (535 aa).

The stretch at 1-105 (MEEAELLKER…KEELQVSTKE (105 aa)) forms a coiled coil. The disordered stretch occupies residues 423 to 450 (VVIDDDDDDDDDEEADKKGEENTKESVS). Residues 424 to 436 (VIDDDDDDDDDEE) show a composition bias toward acidic residues. The segment covering 437 to 446 (ADKKGEENTK) has biased composition (basic and acidic residues).

It belongs to the paralemmin family.

The protein localises to the cytoplasm. Its subcellular location is the cell projection. The protein resides in the dendrite. It localises to the dendritic spine. The polypeptide is Palmdelphin (palmd) (Xenopus laevis (African clawed frog)).